Here is a 257-residue protein sequence, read N- to C-terminus: 3-deoxy-manno-octulosonate cytidylyltransferase (257 aa).

It belongs to the KdsB family.

Its subcellular location is the cytoplasm. The enzyme catalyses 3-deoxy-alpha-D-manno-oct-2-ulosonate + CTP = CMP-3-deoxy-beta-D-manno-octulosonate + diphosphate. It functions in the pathway nucleotide-sugar biosynthesis; CMP-3-deoxy-D-manno-octulosonate biosynthesis; CMP-3-deoxy-D-manno-octulosonate from 3-deoxy-D-manno-octulosonate and CTP: step 1/1. It participates in bacterial outer membrane biogenesis; lipopolysaccharide biosynthesis. Activates KDO (a required 8-carbon sugar) for incorporation into bacterial lipopolysaccharide in Gram-negative bacteria. This Stenotrophomonas maltophilia (strain K279a) protein is 3-deoxy-manno-octulosonate cytidylyltransferase.